The following is a 331-amino-acid chain: Nucleoporin Nup35 (331 aa).

Disordered regions lie at residues 1–63 and 79–110; these read MEPM…HELN and AHTA…GLFD. Polar residues-rich tracts occupy residues 8–20, 35–56, and 84–104; these read SPVN…QTQY, HKNT…SPGG, and GANS…TGPP. In terms of domain architecture, RRM Nup35-type spans 187 to 268; sequence RLSDFWVTIF…SRCTDRSVID (82 aa).

It belongs to the Nup35 family. In terms of assembly, interacts with Nup154.

Its subcellular location is the nucleus. The protein localises to the nuclear pore complex. In terms of biological role, functions as a component of the nuclear pore complex (NPC). May have a role in the organization of the inner nuclear membrane proteins at the nuclear envelope together with Nup154. This Drosophila melanogaster (Fruit fly) protein is Nucleoporin Nup35.